We begin with the raw amino-acid sequence, 384 residues long: Anhydro-N-acetylmuramic acid kinase (384 aa).

9–16 is an ATP binding site; sequence GTSVDGID.

This sequence belongs to the anhydro-N-acetylmuramic acid kinase family.

It catalyses the reaction 1,6-anhydro-N-acetyl-beta-muramate + ATP + H2O = N-acetyl-D-muramate 6-phosphate + ADP + H(+). It functions in the pathway amino-sugar metabolism; 1,6-anhydro-N-acetylmuramate degradation. It participates in cell wall biogenesis; peptidoglycan recycling. Its function is as follows. Catalyzes the specific phosphorylation of 1,6-anhydro-N-acetylmuramic acid (anhMurNAc) with the simultaneous cleavage of the 1,6-anhydro ring, generating MurNAc-6-P. Is required for the utilization of anhMurNAc either imported from the medium or derived from its own cell wall murein, and thus plays a role in cell wall recycling. In Rippkaea orientalis (strain PCC 8801 / RF-1) (Cyanothece sp. (strain PCC 8801)), this protein is Anhydro-N-acetylmuramic acid kinase.